Here is a 570-residue protein sequence, read N- to C-terminus: Multidrug and toxin extrusion protein 1 (570 aa).

Methionine 1 bears the N-acetylmethionine mark. Topologically, residues 1-37 (MEAPEEPAPVRGGPEATLEIHGSRFLRLSAFREELRA) are cytoplasmic. Residues 38–58 (LLVLAGPAFLVQLMVFLISFI) form a helical membrane-spanning segment. Residues 59–72 (SSVFCGHLGKLELD) are Extracellular-facing. A helical transmembrane segment spans residues 73 to 93 (AVTLAIAVINVTGVSVGFGLS). Over 94–120 (SACDTLISQTYGSQNLKHVGVILQRSA) the chain is Cytoplasmic. The chain crosses the membrane as a helical span at residues 121–141 (LILLLCCFPCWALFLNTQHIL). The Extracellular portion of the chain corresponds to 142–152 (LLFRQDPDVSR). A helical transmembrane segment spans residues 153-173 (LTQTYVTIFIPALPATFLYML). The Cytoplasmic segment spans residues 174 to 176 (QVK). The helical transmembrane segment at 177-197 (YLLNQGIVLPQIVTGVAANLV) threads the bilayer. Residues 198–216 (NALANYLFLHQLHLGAIGS) are Extracellular-facing. The helical transmembrane segment at 217-237 (ALANLISQYTLALLLFFYILG) threads the bilayer. Topologically, residues 238-251 (KKLHQATWGGWSLE) are cytoplasmic. A helical transmembrane segment spans residues 252–272 (CLQDWASFLHLAVPSMLMLCM). Residues 273-295 (EWWAYEVGSFLSGILGMVELGAQ) lie on the Extracellular side of the membrane. A helical transmembrane segment spans residues 296 to 316 (SIVYELAIIVYMVPAGFSVAA). The Cytoplasmic segment spans residues 317-336 (SVRVGNALGAGDMEQARKSS). Residues 337–357 (TVSLLITVLFAVAFSVLLLSC) form a helical membrane-spanning segment. At 358-370 (KDHVGYIFTTDRD) the chain is on the extracellular side. Residues 371–391 (IINLVAQVVPIYAVSHLFEAL) traverse the membrane as a helical segment. Residues 392–408 (ACTSGGVLRGSGNQKVG) are Cytoplasmic-facing. Residues 409 to 429 (AIVNTIGYYVVGLPIGIALMF) traverse the membrane as a helical segment. At 430-437 (ATKLGVMG) the chain is on the extracellular side. A helical transmembrane segment spans residues 438–458 (LWSGIIICTVFQAVCFLGFII). At 459-546 (QLNWKKACQQ…LSRKQLVLRR (88 aa)) the chain is on the cytoplasmic side. A disordered region spans residues 508-534 (DVGKTGETQSDQQMRQEEPLPEHPQDS). The segment covering 521–533 (MRQEEPLPEHPQD) has biased composition (basic and acidic residues). A helical membrane pass occupies residues 547–567 (GLLLLGVFLILLVGILVRFYV). Over 568–570 (RIQ) the chain is Extracellular.

This sequence belongs to the multi antimicrobial extrusion (MATE) (TC 2.A.66.1) family.

It is found in the cell membrane. The protein localises to the apical cell membrane. It carries out the reaction thiamine(out) + H(+)(in) = thiamine(in) + H(+)(out). The enzyme catalyses estrone 3-sulfate(in) + H(+)(out) = estrone 3-sulfate(out) + H(+)(in). The catalysed reaction is creatinine(in) + H(+)(out) = creatinine(out) + H(+)(in). It catalyses the reaction agmatine(in) + H(+)(out) = agmatine(out) + H(+)(in). In terms of biological role, multidrug efflux pump that functions as a H(+)/organic cation antiporter. Plays a physiological role in the excretion of cationic compounds including endogenous metabolites, drugs, toxins through the kidney and liver, into urine and bile respectively. Mediates the efflux of endogenous compounds such as creatinine, vitamin B1/thiamine, agmatine and estrone-3-sulfate. May also contribute to regulate the transport of cationic compounds in testis across the blood-testis-barrier. This Pongo abelii (Sumatran orangutan) protein is Multidrug and toxin extrusion protein 1 (SLC47A1).